We begin with the raw amino-acid sequence, 622 residues long: Chromosomal replication initiator protein DnaA (622 aa).

Positions 1 to 99 are domain I, interacts with DnaA modulators; that stretch reads MADVPADLAA…SAGEPPAPPA (99 aa). The segment at 88–282 is disordered; it reads DDSAGEPPAP…APGPGEPHAR (195 aa). The tract at residues 100 to 281 is domain II; it reads PPMHQSHQGP…PAPGPGEPHA (182 aa). Basic and acidic residues-rich tracts occupy residues 118-137 and 176-210; these read QRDD…RPSD and GYQD…EPWR. The span at 250 to 262 shows a compositional bias: gly residues; it reads PGGHGPGRTGGSV. The tract at residues 282–498 is domain III, AAA+ region; sequence RLNPKYLFDT…GALIRVTAFA (217 aa). Residues Gly-326, Gly-328, Lys-329, and Thr-330 each contribute to the ATP site. The segment at 499-622 is domain IV, binds dsDNA; the sequence is SLNRQPVDLG…TELTNRIKNG (124 aa).

It belongs to the DnaA family. In terms of assembly, oligomerizes as a right-handed, spiral filament on DNA at oriC.

It localises to the cytoplasm. Functionally, plays an essential role in the initiation and regulation of chromosomal replication. ATP-DnaA binds to the origin of replication (oriC) to initiate formation of the DNA replication initiation complex once per cell cycle. Binds the DnaA box (a 9 base pair repeat at the origin) and separates the double-stranded (ds)DNA. Forms a right-handed helical filament on oriC DNA; dsDNA binds to the exterior of the filament while single-stranded (ss)DNA is stabiized in the filament's interior. The ATP-DnaA-oriC complex binds and stabilizes one strand of the AT-rich DNA unwinding element (DUE), permitting loading of DNA polymerase. After initiation quickly degrades to an ADP-DnaA complex that is not apt for DNA replication. Binds acidic phospholipids. In Streptomyces griseus subsp. griseus (strain JCM 4626 / CBS 651.72 / NBRC 13350 / KCC S-0626 / ISP 5235), this protein is Chromosomal replication initiator protein DnaA.